The chain runs to 626 residues: Two-component response regulator ORR24 (626 aa).

The disordered stretch occupies residues 1-22 (MTVEERQGRVGGHGVSGGGGGR). Gly residues predominate over residues 9-22 (RVGGHGVSGGGGGR). The 116-residue stretch at 30-145 (RVLAVDDDPT…QLRTIWQHVI (116 aa)) folds into the Response regulatory domain. A 4-aspartylphosphate modification is found at aspartate 81. Positions 151–162 (DAKNRGNDDDAG) are enriched in basic and acidic residues. Disordered regions lie at residues 151-215 (DAKN…KKPR) and 400-440 (LQPL…RTTN). Residues 191–202 (NGDDGDDSDENS) are compositionally biased toward acidic residues. The segment at residues 210-269 (TQKKPRVVWSVELHRKFVAAVNQLGIEKAVPKKILDLMNVENITRENVASHLQKYRLYLK) is a DNA-binding region (myb-like GARP). The segment covering 400–421 (LQPLESSSQQHLSRVHSSSADP) has biased composition (polar residues).

Belongs to the ARR family. Type-B subfamily. In terms of processing, two-component system major event consists of a His-to-Asp phosphorelay between a sensor histidine kinase (HK) and a response regulator (RR). In plants, the His-to-Asp phosphorelay involves an additional intermediate named Histidine-containing phosphotransfer protein (HPt). This multistep phosphorelay consists of a His-Asp-His-Asp sequential transfer of a phosphate group between first a His and an Asp of the HK protein, followed by the transfer to a conserved His of the HPt protein and finally the transfer to an Asp in the receiver domain of the RR protein.

Its subcellular location is the nucleus. Functionally, transcriptional activator that binds specific DNA sequence. Functions as a response regulator involved in His-to-Asp phosphorelay signal transduction system. Phosphorylation of the Asp residue in the receiver domain activates the ability of the protein to promote the transcription of target genes. May directly activate some type-A response regulators in response to cytokinins. The sequence is that of Two-component response regulator ORR24 from Oryza sativa subsp. indica (Rice).